A 176-amino-acid chain; its full sequence is dCTP deaminase (176 aa).

Residues 99–104 (RSTLAR) and Asp-115 contribute to the dCTP site. Glu-125 functions as the Proton donor/acceptor in the catalytic mechanism. Position 163 (Gln-163) interacts with dCTP.

This sequence belongs to the dCTP deaminase family. In terms of assembly, homotrimer.

It carries out the reaction dCTP + H2O + H(+) = dUTP + NH4(+). Its pathway is pyrimidine metabolism; dUMP biosynthesis; dUMP from dCTP (dUTP route): step 1/2. Catalyzes the deamination of dCTP to dUTP. In Pyrobaculum arsenaticum (strain DSM 13514 / JCM 11321 / PZ6), this protein is dCTP deaminase.